A 361-amino-acid chain; its full sequence is NudC domain-containing protein 3 (361 aa).

A compositionally biased stretch (basic and acidic residues) spans 87-97; sequence KIRRKEEEEAK. Disordered regions lie at residues 87–106 and 124–158; these read KIRR…AAEK and LDGH…VAGA. Position 146 is a phosphoserine (Ser-146). The segment covering 148-158 has biased composition (low complexity); it reads EAEAPGAVAGA. In terms of domain architecture, CS spans 185–277; the sequence is AVRENYTWSQ…VGEYWWNAIL (93 aa). Residues Ser-340 and Ser-355 each carry the phosphoserine modification.

In Homo sapiens (Human), this protein is NudC domain-containing protein 3 (NUDCD3).